Consider the following 302-residue polypeptide: Arginase (302 aa).

His-103, Asp-126, His-128, and Asp-130 together coordinate Mn(2+). Substrate is bound by residues 128–132, 139–141, and Asp-180; these read HGDLN and SGN. Residues Asp-229 and Asp-231 each coordinate Mn(2+). Substrate is bound by residues Thr-243 and Glu-274.

Belongs to the arginase family. Mn(2+) is required as a cofactor.

The catalysed reaction is L-arginine + H2O = urea + L-ornithine. The protein operates within nitrogen metabolism; urea cycle; L-ornithine and urea from L-arginine: step 1/1. The protein is Arginase (arg) of Staphylococcus aureus (strain COL).